Here is a 91-residue protein sequence, read N- to C-terminus: Tityustoxin-19 (91 aa).

The signal sequence occupies residues 1–25 (MVATNRCCVFALLFALLLVHSLTEA). The 34-residue stretch at 58–91 (EYACPAIDKFCEDHCAAKKAVGKCDDFKCNCIKL) folds into the BetaSPN-type CS-alpha/beta domain. 3 disulfide bridges follow: cysteine 61–cysteine 81, cysteine 68–cysteine 86, and cysteine 72–cysteine 88.

It belongs to the long chain scorpion toxin family. Class 2 subfamily. As to expression, expressed by the venom gland.

It localises to the secreted. May function as a voltage-gated potassium channel blocker and may have cytolytic activity. Is often not detected in the tested venom fractions, suggesting that the toxin is likely subject to frequent processing within the venom. Its function is as follows. Specific and reversible blocker of the potassium channel Kv1.2/KCNA2 (IC(50)=544 nM). Functionally, shows cytolytic effects on erythrocytes and induces non-selective pore formation when high concentrations (300 nM) are applied on oocytes. In terms of biological role, does not cause hemolysis, mast cell degranulation, LDH release, and does not have antimicrobial activity. Does not cause edema and pain. The protein is Tityustoxin-19 of Tityus serrulatus (Brazilian scorpion).